The following is a 334-amino-acid chain: ATP-dependent kinase YFH7 (334 aa).

Residue 30 to 38 (GHPGSGKST) participates in ATP binding.

The protein belongs to the YFH7 family.

Functionally, ATP-dependent kinase that could be involved in endoplasmic reticulum membrane assembly. The chain is ATP-dependent kinase YFH7 (YFH7) from Eremothecium gossypii (strain ATCC 10895 / CBS 109.51 / FGSC 9923 / NRRL Y-1056) (Yeast).